The following is a 238-amino-acid chain: Uridylate kinase (238 aa).

Residue 12-15 (KLSG) participates in ATP binding. The interval 20–25 (GEKGFG) is involved in allosteric activation by GTP. Position 54 (Gly54) interacts with UMP. The ATP site is built by Gly55 and Arg59. UMP is bound by residues Asp74 and 135-142 (TGSPYFST). ATP-binding residues include Asn163, Tyr169, and Asp172.

This sequence belongs to the UMP kinase family. In terms of assembly, homohexamer.

It is found in the cytoplasm. The catalysed reaction is UMP + ATP = UDP + ADP. It participates in pyrimidine metabolism; CTP biosynthesis via de novo pathway; UDP from UMP (UMPK route): step 1/1. Its activity is regulated as follows. Allosterically activated by GTP. Inhibited by UTP. In terms of biological role, catalyzes the reversible phosphorylation of UMP to UDP. This is Uridylate kinase from Lactococcus lactis subsp. lactis (strain IL1403) (Streptococcus lactis).